A 95-amino-acid chain; its full sequence is MRTGRKTCTDYINKSFREQIIYKEEWLPRSIPTSLLTAAGSKSCIGDRGTNGRTEAEHDGIPHSRKKVSSAHFNPSTLLFLLKRLGHPVYLREGE.

The segment at 46-68 is disordered; it reads GDRGTNGRTEAEHDGIPHSRKKV.

This is an uncharacterized protein from Schizosaccharomyces pombe (strain 972 / ATCC 24843) (Fission yeast).